The primary structure comprises 336 residues: MGRSAFGSRTRMTAFVDLAARLAAEPADAALKDVVLTIAETCAQISRVVASGALSGSLGAAGSTNVQDEEQKKLDVITNDMLSDALKACGPVAGLASEELEEVEPTGRVGGYLVTFDPLDGSSNIDVNVSVGTIFSVLPAPAGHAPTEGDFLQPGRNQVAAGYAVYGPQTMLVVTLSGGVNGFTLSADGRWLLTHPDLAIKPDTAEFAINMSNQRHWAPAVRRYIDGCLQGKDGARGKNFNMRWVASMVADVHRIMMRGGVFMYPWDAREPDKPGKLRLMYEANPMSLLAERAGGKSIEGLNEILDINPAKLHQRVPVVLGSANEVEVIRAEMRAG.

Positions 98, 117, 119, and 120 each coordinate Mg(2+). Substrate-binding positions include Asp-120–Ser-123, Asn-210, and Lys-276. Glu-282 provides a ligand contact to Mg(2+).

Belongs to the FBPase class 1 family. In terms of assembly, homotetramer. Mg(2+) serves as cofactor.

The protein localises to the cytoplasm. The enzyme catalyses beta-D-fructose 1,6-bisphosphate + H2O = beta-D-fructose 6-phosphate + phosphate. Its pathway is carbohydrate biosynthesis; gluconeogenesis. The polypeptide is Fructose-1,6-bisphosphatase class 1 (Caulobacter vibrioides (strain ATCC 19089 / CIP 103742 / CB 15) (Caulobacter crescentus)).